We begin with the raw amino-acid sequence, 200 residues long: Histone H1 (200 aa).

Residues methionine 1–alanine 14 are compositionally biased toward low complexity. Disordered regions lie at residues methionine 1–threonine 20 and aspartate 78–alanine 200. The 76-residue stretch at threonine 18 to lysine 93 folds into the H15 domain. Residues lysine 94–lysine 116 are compositionally biased toward low complexity. The span at lysine 120–proline 131 shows a compositional bias: basic and acidic residues. Over residues threonine 159 to lysine 185 the composition is skewed to low complexity.

It belongs to the histone H1/H5 family.

The protein resides in the nucleus. The protein localises to the chromosome. In terms of biological role, could act as an H1-type linker histone. The chain is Histone H1 (hhoA) from Emericella nidulans (strain FGSC A4 / ATCC 38163 / CBS 112.46 / NRRL 194 / M139) (Aspergillus nidulans).